Reading from the N-terminus, the 225-residue chain is Protein-L-isoaspartate O-methyltransferase (225 aa).

Residue S75 is part of the active site.

It belongs to the methyltransferase superfamily. L-isoaspartyl/D-aspartyl protein methyltransferase family.

The protein localises to the cytoplasm. The enzyme catalyses [protein]-L-isoaspartate + S-adenosyl-L-methionine = [protein]-L-isoaspartate alpha-methyl ester + S-adenosyl-L-homocysteine. Its function is as follows. Catalyzes the methyl esterification of L-isoaspartyl residues in peptides and proteins that result from spontaneous decomposition of normal L-aspartyl and L-asparaginyl residues. It plays a role in the repair and/or degradation of damaged proteins. This Xanthomonas oryzae pv. oryzae (strain PXO99A) protein is Protein-L-isoaspartate O-methyltransferase.